Here is a 149-residue protein sequence, read N- to C-terminus: Transcriptional repressor NrdR (149 aa).

A zinc finger spans residues 3 to 34 (CPFCAAVDTKVIDSRLVGDGSQVRRRRQCLVC). The region spanning 49–139 (PRVIKSDEVR…VYRSFEDIRE (91 aa)) is the ATP-cone domain.

Belongs to the NrdR family. It depends on Zn(2+) as a cofactor.

Its function is as follows. Negatively regulates transcription of bacterial ribonucleotide reductase nrd genes and operons by binding to NrdR-boxes. The sequence is that of Transcriptional repressor NrdR from Serratia proteamaculans (strain 568).